The primary structure comprises 98 residues: NADH-ubiquinone oxidoreductase chain 4L (98 aa).

3 helical membrane passes run 1-21, 29-49, and 61-81; these read MSIT…GLLL, SLLC…MIIL, and IILL…LVMV.

It belongs to the complex I subunit 4L family. Core subunit of respiratory chain NADH dehydrogenase (Complex I) which is composed of 45 different subunits.

The protein resides in the mitochondrion inner membrane. The enzyme catalyses a ubiquinone + NADH + 5 H(+)(in) = a ubiquinol + NAD(+) + 4 H(+)(out). Its function is as follows. Core subunit of the mitochondrial membrane respiratory chain NADH dehydrogenase (Complex I) which catalyzes electron transfer from NADH through the respiratory chain, using ubiquinone as an electron acceptor. Part of the enzyme membrane arm which is embedded in the lipid bilayer and involved in proton translocation. In Platyrrhinus dorsalis (Thomas's broad-nosed bat), this protein is NADH-ubiquinone oxidoreductase chain 4L (MT-ND4L).